A 188-amino-acid polypeptide reads, in one-letter code: Putative 3-methyladenine DNA glycosylase (188 aa).

This sequence belongs to the DNA glycosylase MPG family.

The chain is Putative 3-methyladenine DNA glycosylase from Ehrlichia ruminantium (strain Welgevonden).